Here is a 623-residue protein sequence, read N- to C-terminus: Heterogeneous nuclear ribonucleoprotein L (623 aa).

Over residues 1 to 16 (MSRRLLPRAEKRRRRL) the composition is skewed to basic residues. The interval 1 to 97 (MSRRLLPRAE…NYDDPHKTPA (97 aa)) is disordered. Residues 17–27 (EQRQQPDEQLR) show a composition bias toward basic and acidic residues. Positions 28 to 37 (RAGAMVKMAA) are enriched in low complexity. Over residues 38–54 (AGGGGGGGRYYGGGNEG) the composition is skewed to gly residues. Glycyl lysine isopeptide (Lys-Gly) (interchain with G-Cter in SUMO2) cross-links involve residues K59 and K62. A compositionally biased stretch (gly residues) spans 69–87 (QHGGGGGGGSGAAGGGGGE). At S98 the chain carries Phosphoserine. The 75-residue stretch at 99 to 173 (PVVHIRGLID…HPAFVNYSTS (75 aa)) folds into the RRM 1 domain. Residue K133 forms a Glycyl lysine isopeptide (Lys-Gly) (interchain with G-Cter in SUMO2) linkage. A Phosphoserine modification is found at S182. One can recognise an RRM 2 domain in the interval 190 to 267 (SVLLFTILNP…CTLKIEYAKP (78 aa)). N6-acetyllysine is present on K266. Polar residues predominate over residues 281-298 (DYTNPNLSGQGDPGSNPN). Residues 281 to 413 (DYTNPNLSGQ…PPPPDYGPHA (133 aa)) are disordered. Phosphoserine occurs at positions 288 and 295. K299 participates in a covalent cross-link: Glycyl lysine isopeptide (Lys-Gly) (interchain with G-Cter in SUMO2). Residues R388 and R392 each carry the asymmetric dimethylarginine modification. Pro residues predominate over residues 398–409 (GHPPPPPPPPDY). At S415 the chain carries Phosphoserine. RRM domains lie at 416–490 (PVLM…VSKQ) and 498–586 (SYGL…WDSK). The residue at position 578 (S578) is a Phosphoserine; by CaMK4. Residue K602 forms a Glycyl lysine isopeptide (Lys-Gly) (interchain with G-Cter in SUMO2) linkage.

In terms of assembly, identified in a IGF2BP1-dependent mRNP granule complex containing untranslated mRNAs. Interacts with HNRNPLL. Interacts with APEX1; the interaction is DNA-dependent. Component of a complex with SETD2. Interacts with ELAVL1. Part of a transcription inhibitory ribonucleoprotein complex composed at least of the circular RNA circZNF827, ZNF827 and HNRNPK. Interacts with CHD8 in an RNA-dependent manner. In terms of processing, several isoelectric forms of the L protein are probably the results of post-translational modifications. Post-translationally, phosphorylation at Ser-578 by CaMK4 enhances interaction with a CaMK4-responsive RNA element (CaRRE1), and prevents inclusion of the stress axis-regulated exon (STREX) of the KCNMA1 potassium channel transcripts upon membrane depolarization.

It localises to the nucleus. Its subcellular location is the nucleoplasm. The protein resides in the cytoplasm. Functionally, splicing factor binding to exonic or intronic sites and acting as either an activator or repressor of exon inclusion. Exhibits a binding preference for CA-rich elements. Component of the heterogeneous nuclear ribonucleoprotein (hnRNP) complexes and associated with most nascent transcripts. Associates, together with APEX1, to the negative calcium responsive element (nCaRE) B2 of the APEX2 promoter. As part of a ribonucleoprotein complex composed at least of ZNF827, HNRNPK and the circular RNA circZNF827 that nucleates the complex on chromatin, may negatively regulate the transcription of genes involved in neuronal differentiation. Regulates alternative splicing of a core group of genes involved in neuronal differentiation, likely by mediating H3K36me3-coupled transcription elongation and co-transcriptional RNA processing via interaction with CHD8. The polypeptide is Heterogeneous nuclear ribonucleoprotein L (Rattus norvegicus (Rat)).